The following is a 463-amino-acid chain: MSNKMWGGRFSERPDEIMEDINVSIDVDRHLYAQDIAASKAHAAMLAAQGIITASDAKNIGKGLDTILSEITKGAFEFKRALEDIHMNVESRLGELIGPAAGRLHTARSRNDQVATDFRLYVRDTIDDIDAALAAYQHALASRALDHAGTVMPGFTHLQTAQPVTFGHHLLAYVEMAGRDRGRFADARKRLNESPLGAAALAGTSFPIDRHATAEALGFERPMANSLDAVSDRDFVLETLSAASICAVHLSRFAEEIVIWTSPLVGLIKLSDKFTTGSSIMPQKRNPDAAELVRAKTGRVIGALNALLIVMKGLPLAYQKDMQEDKQGAMEAFAALSLAIRAMTGMALDLVPDEARMKAAAGEGYATATDLADWLVRTLKMPFREAHHVTGRIVALASKQGVALHELPLSAMQQVEPKITADVLGVLSVESSVKSRTSFGGTAPKNVASQAKGWLKRLEKQRK.

The protein belongs to the lyase 1 family. Argininosuccinate lyase subfamily.

The protein localises to the cytoplasm. The enzyme catalyses 2-(N(omega)-L-arginino)succinate = fumarate + L-arginine. It participates in amino-acid biosynthesis; L-arginine biosynthesis; L-arginine from L-ornithine and carbamoyl phosphate: step 3/3. The sequence is that of Argininosuccinate lyase from Bradyrhizobium sp. (strain BTAi1 / ATCC BAA-1182).